We begin with the raw amino-acid sequence, 676 residues long: tRNA 5-methylaminomethyl-2-thiouridine biosynthesis bifunctional protein MnmC (676 aa).

The tract at residues M1–N241 is tRNA (mnm(5)s(2)U34)-methyltransferase. The interval I268–K676 is FAD-dependent cmnm(5)s(2)U34 oxidoreductase.

It in the N-terminal section; belongs to the methyltransferase superfamily. tRNA (mnm(5)s(2)U34)-methyltransferase family. The protein in the C-terminal section; belongs to the DAO family. FAD is required as a cofactor.

It localises to the cytoplasm. It catalyses the reaction 5-aminomethyl-2-thiouridine(34) in tRNA + S-adenosyl-L-methionine = 5-methylaminomethyl-2-thiouridine(34) in tRNA + S-adenosyl-L-homocysteine + H(+). In terms of biological role, catalyzes the last two steps in the biosynthesis of 5-methylaminomethyl-2-thiouridine (mnm(5)s(2)U) at the wobble position (U34) in tRNA. Catalyzes the FAD-dependent demodification of cmnm(5)s(2)U34 to nm(5)s(2)U34, followed by the transfer of a methyl group from S-adenosyl-L-methionine to nm(5)s(2)U34, to form mnm(5)s(2)U34. In Histophilus somni (strain 129Pt) (Haemophilus somnus), this protein is tRNA 5-methylaminomethyl-2-thiouridine biosynthesis bifunctional protein MnmC.